A 175-amino-acid polypeptide reads, in one-letter code: Shikimate kinase (175 aa).

Residue 12-19 (GGRASGKS) participates in ATP binding.

This sequence belongs to the shikimate kinase family.

Its subcellular location is the cytoplasm. It catalyses the reaction shikimate + ATP = 3-phosphoshikimate + ADP + H(+). Its pathway is metabolic intermediate biosynthesis; chorismate biosynthesis; chorismate from D-erythrose 4-phosphate and phosphoenolpyruvate: step 5/7. The chain is Shikimate kinase from Nitratidesulfovibrio vulgaris (strain ATCC 29579 / DSM 644 / CCUG 34227 / NCIMB 8303 / VKM B-1760 / Hildenborough) (Desulfovibrio vulgaris).